A 337-amino-acid polypeptide reads, in one-letter code: Glyceraldehyde-3-phosphate dehydrogenase (337 aa).

NAD(+) is bound by residues 17 to 18, aspartate 39, lysine 83, and serine 125; that span reads RI. D-glyceraldehyde 3-phosphate-binding positions include 156 to 158, threonine 187, arginine 202, 215 to 216, and arginine 238; these read SCT and TG. Cysteine 157 acts as the Nucleophile in catalysis. Asparagine 319 is an NAD(+) binding site.

Belongs to the glyceraldehyde-3-phosphate dehydrogenase family. As to quaternary structure, homotetramer.

It localises to the cytoplasm. It catalyses the reaction D-glyceraldehyde 3-phosphate + phosphate + NAD(+) = (2R)-3-phospho-glyceroyl phosphate + NADH + H(+). It participates in carbohydrate degradation; glycolysis; pyruvate from D-glyceraldehyde 3-phosphate: step 1/5. Functionally, catalyzes the oxidative phosphorylation of glyceraldehyde 3-phosphate (G3P) to 1,3-bisphosphoglycerate (BPG) using the cofactor NAD. The first reaction step involves the formation of a hemiacetal intermediate between G3P and a cysteine residue, and this hemiacetal intermediate is then oxidized to a thioester, with concomitant reduction of NAD to NADH. The reduced NADH is then exchanged with the second NAD, and the thioester is attacked by a nucleophilic inorganic phosphate to produce BPG. The polypeptide is Glyceraldehyde-3-phosphate dehydrogenase (gapA) (Mycoplasma genitalium (strain ATCC 33530 / DSM 19775 / NCTC 10195 / G37) (Mycoplasmoides genitalium)).